A 211-amino-acid polypeptide reads, in one-letter code: Shikimate kinase (211 aa).

Positions 1–23 are disordered; it reads MNASANLCAASDNDPQPGDQEAA. 50 to 55 serves as a coordination point for ATP; the sequence is GAGKTT. Threonine 54 lines the Mg(2+) pocket. Substrate-binding residues include aspartate 72, arginine 96, and glycine 118. ATP is bound at residue arginine 156. Residue arginine 175 participates in substrate binding.

The protein belongs to the shikimate kinase family. In terms of assembly, monomer. It depends on Mg(2+) as a cofactor.

Its subcellular location is the cytoplasm. It carries out the reaction shikimate + ATP = 3-phosphoshikimate + ADP + H(+). It participates in metabolic intermediate biosynthesis; chorismate biosynthesis; chorismate from D-erythrose 4-phosphate and phosphoenolpyruvate: step 5/7. Functionally, catalyzes the specific phosphorylation of the 3-hydroxyl group of shikimic acid using ATP as a cosubstrate. The polypeptide is Shikimate kinase (Bordetella bronchiseptica (strain ATCC BAA-588 / NCTC 13252 / RB50) (Alcaligenes bronchisepticus)).